A 526-amino-acid polypeptide reads, in one-letter code: Alpha-1,3-mannosyl-glycoprotein 4-beta-N-acetylglucosaminyltransferase A (526 aa).

Topologically, residues 1–6 are cytoplasmic; the sequence is MRLRNG. The helical; Signal-anchor for type II membrane protein transmembrane segment at 7-27 threads the bilayer; it reads TVATALVFVTSFLTLSWYTTW. The stretch at 28–63 forms a coiled coil; the sequence is QNGKEKLIAYQREFLALKERLRVAEHRISQRSSELN. Residues 28–526 are Lumenal-facing; sequence QNGKEKLIAY…NEIHIKKVTS (499 aa). Asn449 carries an N-linked (GlcNAc...) asparagine glycan. A Phosphoserine modification is found at Ser465.

It belongs to the glycosyltransferase 54 family. A divalent metal cation serves as cofactor. Post-translationally, N-glycosylated.

The protein localises to the golgi apparatus membrane. It localises to the secreted. It catalyses the reaction N(4)-{beta-D-GlcNAc-(1-&gt;2)-alpha-D-Man-(1-&gt;3)-[beta-D-GlcNAc-(1-&gt;2)-alpha-D-Man-(1-&gt;6)]-beta-D-Man-(1-&gt;4)-beta-D-GlcNAc-(1-&gt;4)-beta-D-GlcNAc}-L-asparaginyl-[protein] + UDP-N-acetyl-alpha-D-glucosamine = N(4)-{beta-D-GlcNAc-(1-&gt;2)-[beta-D-GlcNAc-(1-&gt;4)]-alpha-D-Man-(1-&gt;3)-[beta-D-GlcNAc-(1-&gt;2)-alpha-D-Man-(1-&gt;6)]-beta-D-Man-(1-&gt;4)-beta-D-GlcNAc-(1-&gt;4)-beta-D-GlcNAc}-L-asparaginyl-[protein] + UDP + H(+). The enzyme catalyses an N(4)-{beta-D-GlcNAc-(1-&gt;2)-alpha-D-Man-(1-&gt;3)-[alpha-D-Man-(1-&gt;6)]-beta-D-Man-(1-&gt;4)-beta-D-GlcNAc-(1-&gt;4)-beta-D-GlcNAc}-L-asparaginyl-[protein] + UDP-N-acetyl-alpha-D-glucosamine = an N(4)-{beta-D-GlcNAc-(1-&gt;2)-[beta-D-GlcNAc-(1-&gt;4)]-alpha-D-Man-(1-&gt;3)-[alpha-D-Man-(1-&gt;6)]-beta-D-Man-(1-&gt;4)-beta-D-GlcNAc-(1-&gt;4)-beta-D-GlcNAc}-L-asparaginyl-[protein] + UDP + H(+). It carries out the reaction an N(4)-{beta-D-GlcNAc-(1-&gt;2)-alpha-D-Man-(1-&gt;3)-[beta-D-GlcNAc-(1-&gt;2)-[beta-D-GlcNAc-(1-&gt;6)]-alpha-D-Man-(1-&gt;6)]-beta-D-Man-(1-&gt;4)-beta-D-GlcNAc-(1-&gt;4)-beta-D-GlcNAc}-L-asparaginyl-[protein] + UDP-N-acetyl-alpha-D-glucosamine = an N(4)-{beta-D-GlcNAc-(1-&gt;2)-[beta-D-GlcNAc-(1-&gt;4)]-alpha-D-Man-(1-&gt;3)-[beta-D-GlcNAc-(1-&gt;2)-[beta-D-GlcNAc-(1-&gt;6)]-alpha-D-Man-(1-&gt;6)]-beta-D-Man-(1-&gt;4)-beta-D-GlcNAc-(1-&gt;4)-beta-D-GlcNAc}-L-asparaginyl-[protein] + UDP + H(+). The catalysed reaction is an N(4)-{beta-D-GlcNAc-(1-&gt;2)-alpha-D-Man-(1-&gt;3)-[beta-D-GlcNAc-(1-&gt;2)-alpha-D-Man-(1-&gt;6)]-beta-D-Man-(1-&gt;4)-beta-D-GlcNAc-(1-&gt;4)-[alpha-L-Fuc-(1-&gt;6)]-beta-D-GlcNAc}-L-asparaginyl-[protein] + UDP-N-acetyl-alpha-D-glucosamine = N(4)-{beta-D-GlcNAc-(1-&gt;2)-[beta-D-GlcNAc-(1-&gt;4)]-alpha-D-Man-(1-&gt;3)-[beta-D-GlcNAc-(1-&gt;2)-alpha-D-Man-(1-&gt;6)]-beta-D-Man-(1-&gt;4)-beta-D-GlcNAc-(1-&gt;4)-[alpha-L-Fuc-(1-&gt;6)]-beta-D-GlcNAc}-asparaginyl-[protein] + UDP + H(+). It catalyses the reaction an N(4)-{beta-D-GlcNAc-(1-&gt;2)-alpha-D-Man-(1-&gt;3)-[beta-D-Gal-(1-&gt;4)-beta-D-GlcNAc-(1-&gt;2)-alpha-D-Man-(1-&gt;6)]-beta-D-Man-(1-&gt;4)-beta-D-GlcNAc-(1-&gt;4)-beta-D-GlcNAc}-L-asparaginyl-[protein] + UDP-N-acetyl-alpha-D-glucosamine = an N(4)-{beta-D-GlcNAc-(1-&gt;2)-[beta-D-GlcNAc-(1-&gt;4)]-alpha-D-Man-(1-&gt;3)-[beta-D-Gal-(1-&gt;4)-beta-D-GlcNAc-(1-&gt;2)-alpha-D-Man-(1-&gt;6)]-beta-D-Man-(1-&gt;4)-beta-D-GlcNAc-(1-&gt;4)-beta-D-GlcNAc}-L-asparaginyl-[protein] + UDP + H(+). The enzyme catalyses N(4)-{beta-D-GlcNAc-(1-&gt;2)-alpha-D-Man-(1-&gt;3)-[alpha-D-Man-(1-&gt;3)-{alpha-D-Man-(1-&gt;6)}-alpha-D-Man-(1-&gt;6)]-beta-D-Man-(1-&gt;4)-beta-D-GlcNAc-(1-&gt;4)-beta-D-GlcNAc}-asparaginyl-[protein] + UDP-N-acetyl-alpha-D-glucosamine = N(4)-{beta-D-GlcNAc-(1-&gt;2)-[beta-D-GlcNAc-(1-&gt;4)]-alpha-D-Man-(1-&gt;3)-[alpha-D-Man-(1-&gt;3)-{alpha-D-Man-(1-&gt;6)}-alpha-D-Man-(1-&gt;6)]-beta-D-Man-(1-&gt;4)-beta-D-GlcNAc-(1-&gt;4)-beta-D-GlcNAc}-asparaginyl-[protein] + UDP + H(+). It carries out the reaction N(4)-{beta-D-GlcNAc-(1-&gt;2)-alpha-D-Man-(1-&gt;3)-beta-D-Man-(1-&gt;4)-beta-D-GlcNAc-(1-&gt;4)-beta-D-GlcNAc}-asparaginyl-[protein] + UDP-N-acetyl-alpha-D-glucosamine = N(4)-{beta-D-GlcNAc-(1-&gt;2)-[beta-D-GlcNAc-(1-&gt;4)]-alpha-D-Man-(1-&gt;3)-beta-D-Man-(1-&gt;4)-beta-D-GlcNAc-(1-&gt;4)-beta-D-GlcNAc}-asparaginyl-[protein] + UDP + H(+). It participates in protein modification; protein glycosylation. Its activity is regulated as follows. Inhibited by UDP. Functionally, glycosyltransferase that catalyze the transfer of GlcNAc from UDP-GlcNAc to the GlcNAcbeta1-2Manalpha1-3 arm of the core structure of N-linked glycans through a beta1-4 linkage and participates in the production of tri- and tetra-antennary N-linked sugar chains. Involved in glucose transport by mediating SLC2A2/GLUT2 glycosylation, thereby controlling cell-surface expression of SLC2A2 in pancreatic beta cells. This is Alpha-1,3-mannosyl-glycoprotein 4-beta-N-acetylglucosaminyltransferase A from Rattus norvegicus (Rat).